The primary structure comprises 216 residues: Ras-related protein Rab-5C (216 aa).

GTP is bound by residues Ser-30, Ala-31, Gly-33, Lys-34, Ser-35, Ser-36, His-47, Glu-48, Thr-53, Gly-79, Asn-134, Lys-135, Asp-137, Ala-165, and Lys-166. Ser-35 provides a ligand contact to Mg(2+). 2 consecutive short sequence motifs (switch) follow at residues 45 to 57 (QFHE…IGAA) and 78 to 94 (AGQE…YRGA). Thr-53 contacts Mg(2+). The segment at 184–216 (KNEPQNAPGGPGRNRVVDLQESSQPSRSQCCSN) is disordered. Positions 203 to 216 (QESSQPSRSQCCSN) are enriched in polar residues. Residues Cys-213 and Cys-214 are each lipidated (S-geranylgeranyl cysteine).

Belongs to the small GTPase superfamily. Rab family. Mg(2+) serves as cofactor. As to expression, detected in brain, ovary, rectum, small intestine, large intestine, liver, spleen, follicle and kidney (at protein level).

The protein localises to the cell membrane. It localises to the early endosome membrane. It catalyses the reaction GTP + H2O = GDP + phosphate + H(+). Its activity is regulated as follows. Regulated by guanine nucleotide exchange factors (GEFs) which promote the exchange of bound GDP for free GTP. Regulated by GTPase activating proteins (GAPs) which increase the GTP hydrolysis activity. Inhibited by GDP dissociation inhibitors (GDIs). Its function is as follows. The small GTPases Rab are key regulators of intracellular membrane trafficking, from the formation of transport vesicles to their fusion with membranes. Rabs cycle between an inactive GDP-bound form and an active GTP-bound form that is able to recruit to membranes different sets of downstream effectors directly responsible for vesicle formation, movement, tethering and fusion. This is Ras-related protein Rab-5C (RAB5C) from Gallus gallus (Chicken).